The chain runs to 118 residues: Protein YLR162W (118 aa).

Polar residues predominate over residues methionine 1–serine 20. The disordered stretch occupies residues methionine 1–proline 26. The chain crosses the membrane as a helical span at residues leucine 38 to alanine 58.

It localises to the membrane. In terms of biological role, overexpression confers resistance to the antimicrobial peptide MiAMP1. This is Protein YLR162W from Saccharomyces cerevisiae (strain ATCC 204508 / S288c) (Baker's yeast).